The sequence spans 365 residues: Ribosomal RNA large subunit methyltransferase M (365 aa).

Residues Ser-193, 226-229 (CPGG), Asp-245, Asp-265, and Asp-282 each bind S-adenosyl-L-methionine. Lys-311 (proton acceptor) is an active-site residue.

Belongs to the class I-like SAM-binding methyltransferase superfamily. RNA methyltransferase RlmE family. RlmM subfamily. As to quaternary structure, monomer.

It localises to the cytoplasm. The catalysed reaction is cytidine(2498) in 23S rRNA + S-adenosyl-L-methionine = 2'-O-methylcytidine(2498) in 23S rRNA + S-adenosyl-L-homocysteine + H(+). Its function is as follows. Catalyzes the 2'-O-methylation at nucleotide C2498 in 23S rRNA. In Alteromonas mediterranea (strain DSM 17117 / CIP 110805 / LMG 28347 / Deep ecotype), this protein is Ribosomal RNA large subunit methyltransferase M.